Here is a 235-residue protein sequence, read N- to C-terminus: Octanoyltransferase (235 aa).

The region spanning 37–220 (AGGPDTLLLL…AVNDALDGWL (184 aa)) is the BPL/LPL catalytic domain. Substrate is bound by residues 78-85 (RGGKITWH), 150-152 (AIG), and 163-165 (GFA). Cys-181 serves as the catalytic Acyl-thioester intermediate.

This sequence belongs to the LipB family.

It is found in the cytoplasm. It catalyses the reaction octanoyl-[ACP] + L-lysyl-[protein] = N(6)-octanoyl-L-lysyl-[protein] + holo-[ACP] + H(+). Its pathway is protein modification; protein lipoylation via endogenous pathway; protein N(6)-(lipoyl)lysine from octanoyl-[acyl-carrier-protein]: step 1/2. Functionally, catalyzes the transfer of endogenously produced octanoic acid from octanoyl-acyl-carrier-protein onto the lipoyl domains of lipoate-dependent enzymes. Lipoyl-ACP can also act as a substrate although octanoyl-ACP is likely to be the physiological substrate. The protein is Octanoyltransferase of Mycobacterium leprae (strain Br4923).